A 396-amino-acid polypeptide reads, in one-letter code: Elongation factor Tu (396 aa).

In terms of domain architecture, tr-type G spans 10 to 205 (KPHVNIGTIG…ACDDNIPDPV (196 aa)). A G1 region spans residues 19–26 (GHVDHGKT). 19-26 (GHVDHGKT) provides a ligand contact to GTP. Residue threonine 26 participates in Mg(2+) binding. The tract at residues 62-66 (GITIN) is G2. Residues 83–86 (DAPG) form a G3 region. Residues 83-87 (DAPGH) and 138-141 (NKCD) each bind GTP. Residues 138 to 141 (NKCD) form a G4 region. The G5 stretch occupies residues 175–177 (SAL).

The protein belongs to the TRAFAC class translation factor GTPase superfamily. Classic translation factor GTPase family. EF-Tu/EF-1A subfamily. As to quaternary structure, monomer.

The protein resides in the cytoplasm. The enzyme catalyses GTP + H2O = GDP + phosphate + H(+). In terms of biological role, GTP hydrolase that promotes the GTP-dependent binding of aminoacyl-tRNA to the A-site of ribosomes during protein biosynthesis. This chain is Elongation factor Tu, found in Corynebacterium glutamicum (strain R).